The chain runs to 316 residues: Ribose-phosphate pyrophosphokinase (316 aa).

ATP contacts are provided by residues 39–41 (DGE) and 98–99 (RQ). Mg(2+)-binding residues include His-133 and Asp-172. The active site involves Lys-195. Residues Arg-197, Asp-221, and 225 to 229 (DTANT) contribute to the D-ribose 5-phosphate site.

Belongs to the ribose-phosphate pyrophosphokinase family. Class I subfamily. Homohexamer. Mg(2+) is required as a cofactor.

Its subcellular location is the cytoplasm. The enzyme catalyses D-ribose 5-phosphate + ATP = 5-phospho-alpha-D-ribose 1-diphosphate + AMP + H(+). It participates in metabolic intermediate biosynthesis; 5-phospho-alpha-D-ribose 1-diphosphate biosynthesis; 5-phospho-alpha-D-ribose 1-diphosphate from D-ribose 5-phosphate (route I): step 1/1. In terms of biological role, involved in the biosynthesis of the central metabolite phospho-alpha-D-ribosyl-1-pyrophosphate (PRPP) via the transfer of pyrophosphoryl group from ATP to 1-hydroxyl of ribose-5-phosphate (Rib-5-P). This Nitrosomonas europaea (strain ATCC 19718 / CIP 103999 / KCTC 2705 / NBRC 14298) protein is Ribose-phosphate pyrophosphokinase.